The following is a 501-amino-acid chain: Putative glycogen synthase kinase-3 homolog (501 aa).

In terms of domain architecture, Protein kinase spans 33 to 317 (YTDAKVVGNG…PLMGCAHPFF (285 aa)). Residues 39-47 (VGNGSFGVV) and lysine 62 each bind ATP. Aspartate 158 acts as the Proton acceptor in catalysis. Tyrosine 193 is subject to Phosphotyrosine. Disordered stretches follow at residues 355 to 427 (LLPR…HVAV) and 446 to 501 (SYAV…EDEN). Positions 381–390 (ESPRKTEDSQ) are enriched in basic and acidic residues. Composition is skewed to acidic residues over residues 451-471 (EDAE…DYDD) and 482-501 (DDMD…EDEN).

This sequence belongs to the protein kinase superfamily. CMGC Ser/Thr protein kinase family. GSK-3 subfamily. Phosphorylation on Tyr-193 is necessary for the activity.

The enzyme catalyses L-seryl-[tau protein] + ATP = O-phospho-L-seryl-[tau protein] + ADP + H(+). The catalysed reaction is L-threonyl-[tau protein] + ATP = O-phospho-L-threonyl-[tau protein] + ADP + H(+). The sequence is that of Putative glycogen synthase kinase-3 homolog (gskt) from Drosophila melanogaster (Fruit fly).